Consider the following 344-residue polypeptide: Phenylalanine--tRNA ligase alpha subunit (344 aa).

E256 serves as a coordination point for Mg(2+).

Belongs to the class-II aminoacyl-tRNA synthetase family. Phe-tRNA synthetase alpha subunit type 1 subfamily. In terms of assembly, tetramer of two alpha and two beta subunits. The cofactor is Mg(2+).

The protein resides in the cytoplasm. The enzyme catalyses tRNA(Phe) + L-phenylalanine + ATP = L-phenylalanyl-tRNA(Phe) + AMP + diphosphate + H(+). The chain is Phenylalanine--tRNA ligase alpha subunit from Bacillus cereus (strain G9842).